We begin with the raw amino-acid sequence, 172 residues long: Thioredoxin M-type, chloroplastic (172 aa).

The transit peptide at 1-60 directs the protein to the chloroplast; it reads MALESLFKSIHTKTSLSSSIVFIFKGKACLLTSKSRIQESFAELNSFTSLVLLIENHVLL. The 112-residue stretch at 61–172 folds into the Thioredoxin domain; the sequence is HAREAVNEVQ…TLSEKVEKYI (112 aa). Active-site nucleophile residues include Cys97 and Cys100. A disulfide bridge links Cys97 with Cys100.

Belongs to the thioredoxin family. Plant M-type subfamily. As to quaternary structure, forms a complex with heterodimeric ferredoxin-thioredoxin reductase (FTR) and ferredoxin.

Its subcellular location is the plastid. It is found in the chloroplast. Functionally, participates in various redox reactions through the reversible oxidation of the active center dithiol to a disulfide. The M form is known to activate NADP-malate dehydrogenase. This chain is Thioredoxin M-type, chloroplastic, found in Pisum sativum (Garden pea).